The following is a 146-amino-acid chain: Hemoglobin subunit beta-1 (146 aa).

Residues 2 to 146 (HWTAEEKALI…VAHALARRYH (145 aa)) enclose the Globin domain. Residue histidine 92 participates in heme b binding.

The protein belongs to the globin family. As to quaternary structure, heterotetramer of two alpha chains and two beta chains. In terms of tissue distribution, red blood cells.

Involved in oxygen transport from the lung to the various peripheral tissues. This is Hemoglobin subunit beta-1 from Saara hardwickii (Indian spiny-tailed lizard).